The sequence spans 264 residues: 3-methyl-2-oxobutanoate hydroxymethyltransferase (264 aa).

Residues D45 and D84 each contribute to the Mg(2+) site. Residues 45–46, D84, and K112 each bind 3-methyl-2-oxobutanoate; that span reads DS. E114 contributes to the Mg(2+) binding site. E181 functions as the Proton acceptor in the catalytic mechanism.

The protein belongs to the PanB family. Homodecamer; pentamer of dimers. Requires Mg(2+) as cofactor.

It localises to the cytoplasm. It carries out the reaction 3-methyl-2-oxobutanoate + (6R)-5,10-methylene-5,6,7,8-tetrahydrofolate + H2O = 2-dehydropantoate + (6S)-5,6,7,8-tetrahydrofolate. Its pathway is cofactor biosynthesis; (R)-pantothenate biosynthesis; (R)-pantoate from 3-methyl-2-oxobutanoate: step 1/2. Catalyzes the reversible reaction in which hydroxymethyl group from 5,10-methylenetetrahydrofolate is transferred onto alpha-ketoisovalerate to form ketopantoate. This Shewanella halifaxensis (strain HAW-EB4) protein is 3-methyl-2-oxobutanoate hydroxymethyltransferase.